Reading from the N-terminus, the 615-residue chain is UvrABC system protein C (615 aa).

The 80-residue stretch at 12-91 (EKPGVYIMKD…IKKYKPKYNV (80 aa)) folds into the GIY-YIG domain. One can recognise a UVR domain in the interval 203 to 238 (DWLIQKLKEDMKKAAEELRFEEAARIRDQIFAIERT).

Belongs to the UvrC family. As to quaternary structure, interacts with UvrB in an incision complex.

Its subcellular location is the cytoplasm. Its function is as follows. The UvrABC repair system catalyzes the recognition and processing of DNA lesions. UvrC both incises the 5' and 3' sides of the lesion. The N-terminal half is responsible for the 3' incision and the C-terminal half is responsible for the 5' incision. The protein is UvrABC system protein C of Thermoanaerobacter pseudethanolicus (strain ATCC 33223 / 39E) (Clostridium thermohydrosulfuricum).